A 256-amino-acid polypeptide reads, in one-letter code: NAD-dependent protein deacylase 2 (256 aa).

Residues 1-256 (MDSHSPIATV…MPQVVSHIYR (256 aa)) enclose the Deacetylase sirtuin-type domain. NAD(+) contacts are provided by residues 25–44 (GAGLSADSGMPTYRGLGGLY) and 108–111 (QNID). H128 functions as the Proton acceptor in the catalytic mechanism. The Zn(2+) site is built by C136, C139, C158, and C161. NAD(+)-binding positions include 199-201 (GTT), 225-227 (NPG), and A243.

Belongs to the sirtuin family. Class III subfamily. The cofactor is Zn(2+).

It localises to the cytoplasm. It catalyses the reaction N(6)-acetyl-L-lysyl-[protein] + NAD(+) + H2O = 2''-O-acetyl-ADP-D-ribose + nicotinamide + L-lysyl-[protein]. In terms of biological role, NAD-dependent protein deacetylase which modulates the activities of several proteins which are inactive in their acetylated form. The polypeptide is NAD-dependent protein deacylase 2 (cobB2) (Pseudomonas aeruginosa (strain ATCC 15692 / DSM 22644 / CIP 104116 / JCM 14847 / LMG 12228 / 1C / PRS 101 / PAO1)).